A 309-amino-acid chain; its full sequence is tRNA uridine(34) hydroxylase (309 aa).

A Rhodanese domain is found at 130–224 (SDPDTIVIDT…YLEEVPQEES (95 aa)). The active-site Cysteine persulfide intermediate is Cys-184.

The protein belongs to the TrhO family.

The enzyme catalyses uridine(34) in tRNA + AH2 + O2 = 5-hydroxyuridine(34) in tRNA + A + H2O. Catalyzes oxygen-dependent 5-hydroxyuridine (ho5U) modification at position 34 in tRNAs. In Rhizobium johnstonii (strain DSM 114642 / LMG 32736 / 3841) (Rhizobium leguminosarum bv. viciae), this protein is tRNA uridine(34) hydroxylase.